Reading from the N-terminus, the 525-residue chain is MATLLRSKLTNVATSVSNKSQAKVSGMFARMGFQAATDEEAVGFAHCDDLDFEHRQGLQMDILKSEGEPCGDEGAEAPVEGDIHYQRGGAPLPPSGSKDQAVGAGGEFGGHDKPKITAWEAGWNVTNAIQGMFVLGLPYAILHGGYLGLFLIIFAAVVCCYTGKILIACLYEENEDGEVVRVRDSYVAIANACCAPRFPTLGGRVVNVAQIIELVMTCILYVVVSGNLMYNSFPGLPVSQKSWSIIATAVLLPCAFLKNLKAVSKFSLLCTLAHFVINILVIAYCLSRARDWAWEKVKFYIDVKKFPISIGIIVFSYTSQIFLPSLEGNMQQPSEFHCMMNWTHIAACVLKGLFALVAYLTWADETKEVITDNLPGSIRAVVNLFLVAKALLSYPLPFFAAVEVLEKSLFQEGSRAFFPACYGGDGRLKSWGLTLRCALVVFTLLMAIYVPHFALLMGLTGSLTGAGLCFLLPSLFHLRLLWRKLLWHQVFFDVAIFVIGGICSVSGFVHSLEGLIEAYRTNAED.

Residues 1–132 (MATLLRSKLT…WNVTNAIQGM (132 aa)) lie on the Cytoplasmic side of the membrane. The chain crosses the membrane as a helical span at residues 133 to 153 (FVLGLPYAILHGGYLGLFLII). Topologically, residues 154-204 (FAAVVCCYTGKILIACLYEENEDGEVVRVRDSYVAIANACCAPRFPTLGGR) are lumenal, vesicle. Residue Y186 is modified to 3'-nitrotyrosine. Residues 205–225 (VVNVAQIIELVMTCILYVVVS) traverse the membrane as a helical segment. Residues 226-265 (GNLMYNSFPGLPVSQKSWSIIATAVLLPCAFLKNLKAVSK) lie on the Cytoplasmic side of the membrane. A helical transmembrane segment spans residues 266 to 286 (FSLLCTLAHFVINILVIAYCL). Topologically, residues 287–305 (SRARDWAWEKVKFYIDVKK) are lumenal, vesicle. A helical transmembrane segment spans residues 306–326 (FPISIGIIVFSYTSQIFLPSL). At 327–341 (EGNMQQPSEFHCMMN) the chain is on the cytoplasmic side. The chain crosses the membrane as a helical span at residues 342–362 (WTHIAACVLKGLFALVAYLTW). Over 363 to 383 (ADETKEVITDNLPGSIRAVVN) the chain is Lumenal, vesicle. Residues 384-404 (LFLVAKALLSYPLPFFAAVEV) traverse the membrane as a helical segment. Residues 405 to 438 (LEKSLFQEGSRAFFPACYGGDGRLKSWGLTLRCA) are Cytoplasmic-facing. The helical transmembrane segment at 439–459 (LVVFTLLMAIYVPHFALLMGL) threads the bilayer. The Lumenal, vesicle portion of the chain corresponds to 460–461 (TG). The helical transmembrane segment at 462-482 (SLTGAGLCFLLPSLFHLRLLW) threads the bilayer. At 483–489 (RKLLWHQ) the chain is on the cytoplasmic side. The helical transmembrane segment at 490–510 (VFFDVAIFVIGGICSVSGFVH) threads the bilayer. Over 511–525 (SLEGLIEAYRTNAED) the chain is Lumenal, vesicle.

Belongs to the amino acid/polyamine transporter 2 family. In terms of tissue distribution, brain and retina. Localized in horizontal cell tips at both rod and cone terminals.

Its subcellular location is the cytoplasmic vesicle membrane. The protein resides in the presynapse. It carries out the reaction 4-aminobutanoate(out) + n H(+)(in) = 4-aminobutanoate(in) + n H(+)(out). The enzyme catalyses glycine(out) + n H(+)(in) = glycine(in) + n H(+)(out). The catalysed reaction is beta-alanine(out) + n H(+)(in) = beta-alanine(in) + n H(+)(out). Its activity is regulated as follows. Chloride ions activate 4-aminobutanoate/H(+) transport. Functionally, antiporter that exchanges vesicular protons for cytosolic 4-aminobutanoate or to a lesser extend glycine, thus allowing their secretion from nerve terminals. The transport is equally dependent on the chemical and electrical components of the proton gradient. May also transport beta-alanine. Acidification of GABAergic synaptic vesicles is a prerequisite for 4-aminobutanoate uptake. The protein is Vesicular inhibitory amino acid transporter of Mus musculus (Mouse).